Reading from the N-terminus, the 623-residue chain is Membralin-like protein At1g60995 (623 aa).

Residues 24–44 (GFLEYTYLFVAITLFCILVVM) form a helical membrane-spanning segment. Residues 99–119 (SLEVSKTDQESSTSEENTDDT) form a disordered region. 4 helical membrane-spanning segments follow: residues 315–335 (GVLM…SFTL), 363–383 (IFVH…ILFF), 392–412 (LLAF…LISV), and 424–444 (FFLL…YGFS). Disordered regions lie at residues 506-567 (NRTT…QAGA) and 602-623 (EAQV…LSVD). Polar residues predominate over residues 514–531 (PSGPNHTTPNQNTETRSF).

This sequence belongs to the membralin family.

It is found in the membrane. This chain is Membralin-like protein At1g60995, found in Arabidopsis thaliana (Mouse-ear cress).